Reading from the N-terminus, the 438-residue chain is GTPase Der (438 aa).

2 EngA-type G domains span residues 4–168 and 176–351; these read PIVA…PAVP and LKVA…EAAN. Residues 10-17, 57-61, 120-123, 182-189, 229-233, and 294-297 each bind GTP; these read GRPNVGKS, DTGGI, NKVE, DTAGM, and NKWD. The KH-like domain occupies 352–436; the sequence is RRVATGTLNA…PIRLIFRRGR (85 aa).

This sequence belongs to the TRAFAC class TrmE-Era-EngA-EngB-Septin-like GTPase superfamily. EngA (Der) GTPase family. Associates with the 50S ribosomal subunit.

GTPase that plays an essential role in the late steps of ribosome biogenesis. The sequence is that of GTPase Der from Moorella thermoacetica (strain ATCC 39073 / JCM 9320).